The chain runs to 28 residues: Putative antitoxin AF_1079 (28 aa).

Belongs to the UPF0165 family.

In terms of biological role, possibly the antitoxin component of a type II toxin-antitoxin (TA) system. The polypeptide is Putative antitoxin AF_1079 (Archaeoglobus fulgidus (strain ATCC 49558 / DSM 4304 / JCM 9628 / NBRC 100126 / VC-16)).